The following is a 594-amino-acid chain: Capsid vertex component 1 (594 aa).

Disordered stretches follow at residues 52-77 (GRSTGRAPGGDEDDAPASDDAEDAVG), 176-205 (NKRDRQHQLATTTNHRRRGGLRNNLDNGSD), 443-468 (ARRQRERSAPKPQELLFGPRNESGPP), and 575-594 (GRQEPETPRVSGRRLPFDDL). The span at 61–76 (GDEDDAPASDDAEDAV) shows a compositional bias: acidic residues.

It belongs to the herpesviridae CVC1 protein family. As to quaternary structure, interacts (via C-terminus) with capsid vertex component 2/CVC2.

It localises to the virion. The protein resides in the host nucleus. Its function is as follows. Capsid vertex-specific component that plays a role during viral DNA encapsidation, assuring correct genome cleavage and presumably stabilizing capsids that contain full-length viral genomes. The sequence is that of Capsid vertex component 1 from Homo sapiens (Human).